Consider the following 365-residue polypeptide: Ribosomal RNA large subunit methyltransferase F (365 aa).

2 stretches are compositionally biased toward low complexity: residues 1–18 (MPKPAIKTAAKPATSPAG) and 30–42 (AKLKASTAKAASK). Residues 1–50 (MPKPAIKTAAKPATSPAGKRAKPNTPQSVAKLKASTAKAASKPKAKLGEK) form a disordered region.

It belongs to the methyltransferase superfamily. METTL16/RlmF family.

It localises to the cytoplasm. It catalyses the reaction adenosine(1618) in 23S rRNA + S-adenosyl-L-methionine = N(6)-methyladenosine(1618) in 23S rRNA + S-adenosyl-L-homocysteine + H(+). Its function is as follows. Specifically methylates the adenine in position 1618 of 23S rRNA. The polypeptide is Ribosomal RNA large subunit methyltransferase F (Shewanella oneidensis (strain ATCC 700550 / JCM 31522 / CIP 106686 / LMG 19005 / NCIMB 14063 / MR-1)).